Consider the following 378-residue polypeptide: L-asparaginase-like protein GF11609 (378 aa).

The signal sequence occupies residues 1 to 21 (MCSPLPLLILRLLLLTHPSLG). Intrachain disulfides connect cysteine 71-cysteine 76, cysteine 170-cysteine 186, and cysteine 325-cysteine 352.

The protein belongs to the Ntn-hydrolase family.

The polypeptide is L-asparaginase-like protein GF11609 (Drosophila ananassae (Fruit fly)).